A 268-amino-acid chain; its full sequence is MTIYDINFAELYQQHLIACNHYNLPPIKWDKKAVKMAENLVGKPSAYNQQLLQAMNVQTDEAVLDIGCGPGTFAVPLAQQGSTVYALDYSNGMLDCLAQFKQKFGLHHLTTFHKSWADNWDDVPQADVVLASRSTLVDDLDDMIEKLCAKAKKRVFLTSVTQRHFLDEGVFEAIGREDIGFPTYIYLLNRLYQKGIQANLNFIETESGCFQGESYEDLLASVEFSLGELSEKEKQGLKAFYDRKQANNEPISHGQKKWALIWWNVDRI.

This is an uncharacterized protein from Haemophilus influenzae (strain ATCC 51907 / DSM 11121 / KW20 / Rd).